The following is a 120-amino-acid chain: Spermidine export protein MdtJ (120 aa).

4 consecutive transmembrane segments (helical) span residues 1-21 (MFYW…TLSM), 31-51 (TGFI…SFAV), 54-74 (IALG…ITLF), and 81-101 (EALS…IALI).

Belongs to the drug/metabolite transporter (DMT) superfamily. Small multidrug resistance (SMR) (TC 2.A.7.1) family. MdtJ subfamily. As to quaternary structure, forms a complex with MdtI.

The protein localises to the cell inner membrane. Catalyzes the excretion of spermidine. The chain is Spermidine export protein MdtJ from Citrobacter koseri (strain ATCC BAA-895 / CDC 4225-83 / SGSC4696).